Here is a 358-residue protein sequence, read N- to C-terminus: MAAVALLRGAAVGRRSPAWHWRLSGTASHCLARGFGLLGSNPADGVAWTCFRLDGRALVRVRGPDAAPFLLGLSTNELPLSGPPTGAAQPSARAAYAHFLNVQGRTLYDVILYGLPECTEGAPSFLLECDSSVLGALQKHLSMYKIRRKVTVEPSPELHVWAVLPCVPQTSETAPLEERVEGTTMLIRDPRTARMGWRLLTQDDGPALVPRGQLGDLQDYHKYRYQQGIPEGVCDLPPGMALPLESNLVFMNGVSFTKGCYIGQELTARTHHTGVIRKRLFPVKLEGPLPASGVSPGAIVTVTATGQAAGKFRAGQGHVGLALLRSETIKGPLHIKTSESQLVAVTAVVPDWWPTAAK.

Residues 1-94 (MAAVALLRGA…TGAAQPSARA (94 aa)) constitute a mitochondrion transit peptide. Lys222 bears the N6-acetyllysine mark. Lys311 bears the N6-acetyllysine; alternate mark. Residue Lys311 is modified to N6-succinyllysine; alternate.

Belongs to the GcvT family. CAF17/IBA57 subfamily.

It localises to the mitochondrion. Functionally, mitochondrial protein involved in the maturation of mitochondrial [4Fe-4S]-proteins in the late stage of the iron-sulfur cluster assembly pathway. Operates in cooperation with ISCA2 in the maturation of [4Fe-4S] proteins. The polypeptide is Iron-sulfur cluster assembly factor IBA57, mitochondrial (Iba57) (Mus musculus (Mouse)).